Consider the following 603-residue polypeptide: Terpenoid synthase 25 (603 aa).

The Mg(2+) site is built by Asp356, Asp360, Asn500, Thr504, and Glu508. The short motif at 356–360 (DDTCD) is the DDXXD motif element.

The protein belongs to the terpene synthase family. Tpsa subfamily. Mg(2+) serves as cofactor. The cofactor is Mn(2+). As to expression, predominantly expressed in roots but also in flowers.

The protein resides in the cytoplasm. It functions in the pathway secondary metabolite biosynthesis; terpenoid biosynthesis. Involved in terpene biosynthesis in roots. Possesses sesquiterpene (C15) synthase activity in vitro. Does not seem to be involved in diterpene (C20) biosynthesis. The sequence is that of Terpenoid synthase 25 from Arabidopsis thaliana (Mouse-ear cress).